A 1606-amino-acid chain; its full sequence is Phosphatidylinositol 3,4,5-trisphosphate-dependent Rac exchanger 2 protein (1606 aa).

Residues 23-214 (LRVCVLSELQ…KAVCSNINEA (192 aa)) form the DH domain. Residues 245–361 (EMLMCGVLLK…WFEAILKERE (117 aa)) form the PH domain. DEP domains are found at residues 390 to 464 (CRQG…RFRY) and 491 to 566 (SLFT…FFSD). PDZ domains lie at 592-671 (KSLL…VLVS) and 677-754 (TVKI…QDSI). The disordered stretch occupies residues 1581–1606 (GVRDRTPQSAPRLYKLCEPPPPAGEE).

In terms of assembly, interacts with RAC1. Isoform 1 is highly expressed in skeletal muscle, heart and placenta, absent from peripheral blood leukocytes. Isoform 2 is expressed in skeletal muscle, kidney, small intestine, and placenta. Isoform 3 is expressed in the heart.

Functions as a RAC1 guanine nucleotide exchange factor (GEF), activating Rac proteins by exchanging bound GDP for free GTP. Its activity is synergistically activated by phosphatidylinositol 3,4,5-trisphosphate and the beta gamma subunits of heterotrimeric G protein. Mediates the activation of RAC1 in a PI3K-dependent manner. May be an important mediator of Rac signaling, acting directly downstream of both G protein-coupled receptors and phosphoinositide 3-kinase. The polypeptide is Phosphatidylinositol 3,4,5-trisphosphate-dependent Rac exchanger 2 protein (Homo sapiens (Human)).